Consider the following 444-residue polypeptide: Phosphoglucosamine mutase (444 aa).

The active-site Phosphoserine intermediate is serine 100. Serine 100, aspartate 234, aspartate 236, and aspartate 238 together coordinate Mg(2+). Residue serine 100 is modified to Phosphoserine.

It belongs to the phosphohexose mutase family. It depends on Mg(2+) as a cofactor. In terms of processing, activated by phosphorylation.

It carries out the reaction alpha-D-glucosamine 1-phosphate = D-glucosamine 6-phosphate. Its function is as follows. Catalyzes the conversion of glucosamine-6-phosphate to glucosamine-1-phosphate. The chain is Phosphoglucosamine mutase from Rubrobacter xylanophilus (strain DSM 9941 / JCM 11954 / NBRC 16129 / PRD-1).